Reading from the N-terminus, the 319-residue chain is Nuclear hormone receptor family member nhr-174 (319 aa).

The segment at residues 7–81 (DPVCPVCEFP…AGMKRNLVRQ (75 aa)) is a DNA-binding region (nuclear receptor). NR C4-type zinc fingers lie at residues 10 to 31 (CPVC…CGAC) and 47 to 63 (CEKK…CRAC). The region spanning 130 to 319 (EAEKDVSKIL…SMKKSRYLQF (190 aa)) is the NR LBD domain.

The protein belongs to the nuclear hormone receptor family.

The protein localises to the nucleus. Its function is as follows. Orphan nuclear receptor. This Caenorhabditis elegans protein is Nuclear hormone receptor family member nhr-174 (nhr-174).